A 196-amino-acid chain; its full sequence is Large ribosomal subunit protein bL9 (196 aa).

This sequence belongs to the bacterial ribosomal protein bL9 family.

In terms of biological role, binds to the 23S rRNA. The chain is Large ribosomal subunit protein bL9 from Gluconobacter oxydans (strain 621H) (Gluconobacter suboxydans).